The chain runs to 277 residues: Purine nucleoside phosphorylase 2 (277 aa).

Phosphate contacts are provided by residues His65, 85–87 (RGH), and Ala117. Position 197 (Glu197) interacts with a purine D-ribonucleoside. Position 216 (Ser216) interacts with phosphate. A purine D-ribonucleoside is bound at residue Asn239.

Belongs to the PNP/MTAP phosphorylase family. Hexamer. Dimer of trimers.

It catalyses the reaction a purine D-ribonucleoside + phosphate = a purine nucleobase + alpha-D-ribose 1-phosphate. It participates in purine metabolism; xanthosine degradation. The protein operates within purine metabolism; purine nucleoside salvage. With respect to regulation, rapidly inactivated by p-chloromercuriphenylsulfonic acid (p-CMB). Dithiothreitol incubation restores the activity. The purine nucleoside phosphorylases catalyze the phosphorolytic breakdown of the N-glycosidic bond in the beta-(deoxy)ribonucleoside molecules, with the formation of the corresponding free purine bases and pentose-1-phosphate. This protein can degrade all purine nucleosides including xanthosine, inosine and guanosine, but cannot cleave adenosine, deoxyadenosine or hypoxanthine arabinoside. Has a preference for the neutral over the monoanionic form of xanthosine. The sequence is that of Purine nucleoside phosphorylase 2 (xapA) from Escherichia coli (strain K12).